The following is a 145-amino-acid chain: Large ribosomal subunit protein uL16 (145 aa).

Residues 1-17 show a composition bias toward basic residues; sequence MLMPKRVKHRKVQRGRM. A disordered region spans residues 1–20; sequence MLMPKRVKHRKVQRGRMKGV.

It belongs to the universal ribosomal protein uL16 family. In terms of assembly, part of the 50S ribosomal subunit.

Its function is as follows. Binds 23S rRNA and is also seen to make contacts with the A and possibly P site tRNAs. The chain is Large ribosomal subunit protein uL16 from Acetivibrio thermocellus (strain ATCC 27405 / DSM 1237 / JCM 9322 / NBRC 103400 / NCIMB 10682 / NRRL B-4536 / VPI 7372) (Clostridium thermocellum).